The sequence spans 49 residues: SPbeta prophage-derived uncharacterized protein YoqT (49 aa).

The chain crosses the membrane as a helical span at residues 7-29 (CFVNWSFDKIMDYILIAGLYFVF).

The protein resides in the cell membrane. This Bacillus subtilis (strain 168) protein is SPbeta prophage-derived uncharacterized protein YoqT (yoqT).